The sequence spans 490 residues: Putative alanine aminotransferase (490 aa).

Residues A157, S158, Y183, N239, and S308 each coordinate pyridoxal 5'-phosphate. Position 311 is an N6-(pyridoxal phosphate)lysine (K311). R320 contacts pyridoxal 5'-phosphate.

It belongs to the class-I pyridoxal-phosphate-dependent aminotransferase family. Alanine aminotransferase subfamily. In terms of assembly, homodimer. It depends on pyridoxal 5'-phosphate as a cofactor.

It localises to the cytoplasm. Its subcellular location is the mitochondrion. It catalyses the reaction L-alanine + 2-oxoglutarate = pyruvate + L-glutamate. It participates in amino-acid degradation; L-alanine degradation via transaminase pathway; pyruvate from L-alanine: step 1/1. In terms of biological role, alanine aminotransferase involved in both alanine biosynthesis and utilization. The sequence is that of Putative alanine aminotransferase (alt1) from Schizosaccharomyces pombe (strain 972 / ATCC 24843) (Fission yeast).